The following is a 90-amino-acid chain: Small ribosomal subunit protein bS16 (90 aa).

It belongs to the bacterial ribosomal protein bS16 family.

This Bacillus pumilus (strain SAFR-032) protein is Small ribosomal subunit protein bS16.